The primary structure comprises 590 residues: MSDSPAGSNPRTPESSGSGSGGGGKRPAVPAAVSLLPPADPLRQANRLPIRVLKMLSAHTGHLLHPEYLQPLSSTPVSPIELDAKKSPLALLAQTCSQIGKPDPPPSSKLNSVAAAANGLGAEKDPGRSAPGAASAAAALKQLGDSPAEDKSSFKPYSKGSGGGDSRKDSGSSSVSSTSSSSSSSPGDKAGFRVPSAACPPFPPHGAPVSASSSSSSPGGSRGGSPHHSDCKNGGGVGGGELDKKDQEPKPSPEPAAVSRGGGGEPGAHGGAESGASGRKSEPPSALVGAGHVAPVSPYKPGHSVFPLPPSSIGYHGSIVGAYAGYPSQFVPGLDPSKSGLVGGQLSGGLGLPPGKPPSSSPLTGASPPSFLQGLCRDPYCLGGYHGASHLGGSSCSTCSAHDPAGPSLKAGGYPLVYPGHPLQPAALSSSAAQAALPGHPLYTYGFMLQNEPLPHSCNWVAASGPCDKRFATSEELLSHLRTHTALPGAEKLLAAYPGASGLGSAAAAAAAAASCHLHLPPPAAPGSPGSLSLRNPHTLGLSRYHPYGKSHLSTAGGLAVPSLPTAGPYYSPYALYGQRLASASALGYQ.

The segment covering M1–E14 has biased composition (polar residues). Disordered stretches follow at residues M1–R43, C96–V293, and L341–A366. S2 is modified (N-acetylserine). Composition is skewed to low complexity over residues P27 to P37, R128 to A139, G171 to K189, and A207 to G219. Residues E241 to P251 show a composition bias toward basic and acidic residues. A Phosphoserine modification is found at S252. Composition is skewed to gly residues over residues R260–E273 and L341–L352. The C2H2-type zinc-finger motif lies at H456–H484. R580 carries the post-translational modification Omega-N-methylarginine.

The protein belongs to the Elbow/Noc family. Interacts with TLE4; increases transcriptional repression. Interacts with DCAF7 and PHB2. May interact with HSPD1. Expressed in mammary epithelium.

It localises to the nucleus. The protein localises to the cytoplasm. Transcriptional corepressor which does not bind directly to DNA and may regulate transcription through recruitment of histone deacetylases to gene promoters. Regulates cell adhesion, migration and proliferation. May be required for segmental gene expression during hindbrain development. The chain is Zinc finger protein 703 (ZNF703) from Homo sapiens (Human).